The chain runs to 360 residues: Chorismate synthase (360 aa).

NADP(+) is bound by residues Arg48 and Arg54. FMN-binding positions include 125 to 127, 246 to 247, Gly286, 301 to 305, and Arg327; these read RSS, NA, and KPTSS.

This sequence belongs to the chorismate synthase family. As to quaternary structure, homotetramer. It depends on FMNH2 as a cofactor.

It catalyses the reaction 5-O-(1-carboxyvinyl)-3-phosphoshikimate = chorismate + phosphate. It functions in the pathway metabolic intermediate biosynthesis; chorismate biosynthesis; chorismate from D-erythrose 4-phosphate and phosphoenolpyruvate: step 7/7. Functionally, catalyzes the anti-1,4-elimination of the C-3 phosphate and the C-6 proR hydrogen from 5-enolpyruvylshikimate-3-phosphate (EPSP) to yield chorismate, which is the branch point compound that serves as the starting substrate for the three terminal pathways of aromatic amino acid biosynthesis. This reaction introduces a second double bond into the aromatic ring system. In Actinobacillus succinogenes (strain ATCC 55618 / DSM 22257 / CCUG 43843 / 130Z), this protein is Chorismate synthase.